A 703-amino-acid chain; its full sequence is Probable boron transporter 2 (703 aa).

Residues 1 to 35 (MEETFVPFEGIKNDLKGRLMCYKQDWTGGIKAGFR) are Cytoplasmic-facing. A helical membrane pass occupies residues 36–56 (ILAPTTYIFFASAIPVISFGE). Residues 57 to 75 (QLERSTDGVLTAVQTLAST) are Extracellular-facing. A helical transmembrane segment spans residues 76 to 96 (AICGIIHSIIGGQPLLILGVA). Residues 97-120 (EPTVIMYTFMFNFAKGRPELGRNL) lie on the Cytoplasmic side of the membrane. Residues 121 to 141 (FLAWSGWVCVWTSLILFVLAI) traverse the membrane as a helical segment. The Extracellular segment spans residues 142-155 (CGACSFINRFTRVA). Residues 156–176 (GELFGLLIAMLFMQQAIKGLV) traverse the membrane as a helical segment. Residues 177–195 (DEFRAPAREDLKLVEFLPS) are Cytoplasmic-facing. Residues 196 to 216 (WRFANGMFALVLSFGLLITAL) form a helical membrane-spanning segment. The Extracellular portion of the chain corresponds to 217–233 (RSRKARSWRYGTGWLRS). The chain crosses the membrane as a helical span at residues 234 to 254 (LVADYGVPLMVLVWTGVSYIP). Residues 255-289 (TGDVPKGIPRRLFSPNPWSPGAYENWTVVKEMLQV) lie on the Cytoplasmic side of the membrane. A helical membrane pass occupies residues 290–310 (PIVYIIGAFIPATMIAVLYYF). Over 311–337 (DHSVASQLAQQKEFNLRKPSSYHYDLL) the chain is Extracellular. A helical membrane pass occupies residues 338-358 (LLGFLTLMCGLLGIPPSNGVI). Over 359-480 (PQSPMHTKSL…AVMVGGCVAA (122 aa)) the chain is Cytoplasmic. The helical transmembrane segment at 481–501 (MPLLKMIPTSVLWGYFAFMAI) threads the bilayer. Residues 502-557 (ESLPGNQFWERILLLFTAPSRRFKVLEDNHATFVETVPFKTIAMFTIFQTTYLLTC) lie on the Extracellular side of the membrane. Residues 558–578 (FGLTWIPIAGVMFPLLIMFLI) traverse the membrane as a helical segment. Residues 579–703 (PVRQYILPRF…SPLNPSSSSK (125 aa)) are Cytoplasmic-facing. Residues 678 to 703 (EMSPRLSGKGQNSPKPSPLNPSSSSK) are disordered.

Belongs to the anion exchanger (TC 2.A.31.3) family.

The protein resides in the membrane. Functionally, probable boron transporter. Boron is essential for maintaining the integrity of plants cell walls. The polypeptide is Probable boron transporter 2 (BOR2) (Arabidopsis thaliana (Mouse-ear cress)).